Consider the following 514-residue polypeptide: MQQLNPSEISELIRARIAGFEGRVETRSQGTIISLSDGILRIHGLEDVMYGEMLELPGGRFGLAMNLEQDNVGAVVLGEFSGLQEGDVVKCTGRVMQVPIGKALLGRVVNALGQPVDGKGAIDAEEFDVLEKIAPGVIDRQSVDEPMQTGIKSIDAMVPIGRGQRELIIGDRQTGKTAVAVDAILNQKGKDVQCIYVAIGQKASTVAGVVRKLEEYGAMEYTTVIAANASESAAMQYLAPYAGCTMGEYFRDRGMNALIVYDDLTKQAWAYRHISLLLRRPPGREAYPGDVFYLHSRLLERAARVNADFVEKFTKGEVKGKTGSLTALPIIETQAGDVSAFVPTNVISITDGQIYLETDLFNAGIRPAINAGLSVSRVGGAAQTKIIKKLGGGIRLDLAQYRELAAFAQFASDLDEITRKQIERGKRVTELLKQDQFSPMSVADEGAALFAASSGALDDVEVANVRPFEKALLAYLNSNNKELMAGIEEKKDLTDDLKKQLDAAVKQFKSGSTY.

Residue 170–177 participates in ATP binding; that stretch reads GDRQTGKT.

The protein belongs to the ATPase alpha/beta chains family. In terms of assembly, F-type ATPases have 2 components, CF(1) - the catalytic core - and CF(0) - the membrane proton channel. CF(1) has five subunits: alpha(3), beta(3), gamma(1), delta(1), epsilon(1). CF(0) has three main subunits: a(1), b(2) and c(9-12). The alpha and beta chains form an alternating ring which encloses part of the gamma chain. CF(1) is attached to CF(0) by a central stalk formed by the gamma and epsilon chains, while a peripheral stalk is formed by the delta and b chains.

It is found in the cell inner membrane. The catalysed reaction is ATP + H2O + 4 H(+)(in) = ADP + phosphate + 5 H(+)(out). Functionally, produces ATP from ADP in the presence of a proton gradient across the membrane. The alpha chain is a regulatory subunit. This chain is ATP synthase subunit alpha, found in Acidithiobacillus ferridurans.